The chain runs to 473 residues: MLLIGYFAYKRTSNLTDYMLGGRSLGPAVTALSAGAADMSGWLLMGLPGAMFSTGLSGAWIVIGLCLGAWANWLYVAPRLRTYTEKAGNSITIPGFLENRFGDQTKLLRLFSGIVILVFFTFYVSSGMVSGGVLFNSILGMDYHTGLWIVTGVVVAYTLFGGFLAVSWTDFVQGIIMFAALILVPIVTFFHTGGAGDTVAEIRSVDPDMFNIFKGTSVLGIISLFAWGLGYFGQPHIIVRFMAITSVKEIKRARRIGMGWMILSAVGAVLTGLGGIAYYHQRGMTLKDPETIFIQLGNILFHPIITGFLISAILAAIMSTISSQLLVTSSSLVEDLYKSMFRRSASDKELVFLGRLAVLAVSIVALVLAWEKNNTILGLVSYAWAGFGASFGPVVLLSLFWKRMTKWGALAGMIVGAATVIIWANAGLSDFLYEMIPGFAASLLSVFFVSILTQAPSQAVTDQFNDYQDTMSQ.

A run of 12 helical transmembrane segments spans residues 32–52 (LSAG…GAMF), 56–76 (LSGA…WLYV), 114–134 (IVIL…GGVL), 146–166 (GLWI…FLAV), 171–191 (FVQG…TFFH), 218–238 (VLGI…PHII), 256–276 (IGMG…LGGI), 299–319 (ILFH…AIMS), 350–370 (LVFL…VLAW), 376–396 (ILGL…PVVL), 408–428 (GALA…NAGL), and 431–451 (FLYE…FVSI).

The protein belongs to the sodium:solute symporter (SSF) (TC 2.A.21) family.

It localises to the cell membrane. The enzyme catalyses L-proline(in) + Na(+)(in) = L-proline(out) + Na(+)(out). Its function is as follows. Catalyzes the high-affinity uptake of extracellular proline. Important for the use of proline as a sole carbon and energy source or a sole nitrogen source. The protein is High-affinity proline transporter PutP of Bacillus subtilis (strain 168).